The chain runs to 157 residues: Ribonuclease H (157 aa).

Positions 2–145 (NAEISKIYTD…CDAIARAFAA (144 aa)) constitute an RNase H type-1 domain. Residues D11, E50, D74, and D137 each contribute to the Mg(2+) site.

This sequence belongs to the RNase H family. Monomer. Mg(2+) serves as cofactor.

Its subcellular location is the cytoplasm. It catalyses the reaction Endonucleolytic cleavage to 5'-phosphomonoester.. Its function is as follows. Endonuclease that specifically degrades the RNA of RNA-DNA hybrids. This Cyanothece sp. (strain PCC 7425 / ATCC 29141) protein is Ribonuclease H.